The following is a 190-amino-acid chain: 7-methyl-GTP pyrophosphatase (190 aa).

The Proton acceptor role is filled by aspartate 69.

This sequence belongs to the Maf family. YceF subfamily. A divalent metal cation serves as cofactor.

It localises to the cytoplasm. It catalyses the reaction N(7)-methyl-GTP + H2O = N(7)-methyl-GMP + diphosphate + H(+). Functionally, nucleoside triphosphate pyrophosphatase that hydrolyzes 7-methyl-GTP (m(7)GTP). May have a dual role in cell division arrest and in preventing the incorporation of modified nucleotides into cellular nucleic acids. The sequence is that of 7-methyl-GTP pyrophosphatase from Xanthomonas oryzae pv. oryzae (strain MAFF 311018).